The sequence spans 568 residues: Delta 8-(E)-sphingolipid desaturase (568 aa).

One can recognise a Cytochrome b5 heme-binding domain in the interval D2–D77. Heme is bound by residues H37 and H60. The next 2 membrane-spanning stretches (helical) occupy residues F241–A261 and L272–W292. Positions H259–H263 match the Histidine box-1 motif. The Histidine box-2 signature appears at H296–H300. Transmembrane regions (helical) follow at residues Y352–L377, Y389–C409, and I421–A441. A Histidine box-3 motif is present at residues Q480–H484. A compositionally biased stretch (basic and acidic residues) spans A549–Y560. Positions A549–A568 are disordered.

Belongs to the fatty acid desaturase type 1 family.

It localises to the membrane. It catalyses the reaction an N-acylsphing-4-enine + 2 Fe(II)-[cytochrome b5] + O2 + 2 H(+) = a (4E,8E)-4-sphinga-4,8-dienine ceramide + 2 Fe(III)-[cytochrome b5] + 2 H2O. The protein operates within lipid metabolism; sphingolipid metabolism. Delta(8)-fatty-acid desaturase which introduces a double bond at the 8-position in the long-chain base (LCB) of ceramides. Required for the formation of the di-unsaturated sphingoid base (E,E)-sphinga-4,8-dienine during glucosylceramide (GluCer) biosynthesis. The protein is Delta 8-(E)-sphingolipid desaturase of Lachancea kluyveri (strain ATCC 58438 / CBS 3082 / BCRC 21498 / NBRC 1685 / JCM 7257 / NCYC 543 / NRRL Y-12651) (Yeast).